The sequence spans 344 residues: GDSL esterase/lipase At2g19010 (344 aa).

The first 21 residues, 1–21, serve as a signal peptide directing secretion; it reads MSKACWLVAAIIFTAATVVYG. S33 functions as the Nucleophile in the catalytic mechanism. N303 is a glycosylation site (N-linked (GlcNAc...) asparagine). Catalysis depends on residues D311 and H314.

The protein belongs to the 'GDSL' lipolytic enzyme family.

The protein resides in the secreted. In Arabidopsis thaliana (Mouse-ear cress), this protein is GDSL esterase/lipase At2g19010.